The chain runs to 252 residues: MSEKLRRCRKELTAAIDRAFEGVRHSQECTAQQRLDAPSLTSQPVHRLLCRNPLAACPSAAPYSGASCAPESENPAFGTHHIPVNSKLQQPLYPKRKPLTSKENVLMQSSILARDRQFWRAAGDGEDWRKDSLRKDMERDLKADPNVLLSSSSQEVTKDLLDMIDHTSIRTIEELAGKLEFENELNRVCGHCQDSPFKEEAWALLVDESPQKALDADPGSLKQALDDQNIVETVLDLEEDYNLMTSFKYQIE.

Phosphoserine is present on residues Ser-195 and Ser-209.

Testis-specific. Highly expressed in spermatocytes (at protein level).

Functionally, essential for normal spermatogenesis and male fertility. This is an uncharacterized protein from Mus musculus (Mouse).